The primary structure comprises 357 residues: tRNA N6-adenosine threonylcarbamoyltransferase (357 aa).

Fe cation-binding residues include H115 and H119. Residues 137–141 (LASGG), D170, G183, and N281 each bind substrate. Residue D309 coordinates Fe cation.

The protein belongs to the KAE1 / TsaD family. The cofactor is Fe(2+).

It localises to the cytoplasm. It catalyses the reaction L-threonylcarbamoyladenylate + adenosine(37) in tRNA = N(6)-L-threonylcarbamoyladenosine(37) in tRNA + AMP + H(+). Functionally, required for the formation of a threonylcarbamoyl group on adenosine at position 37 (t(6)A37) in tRNAs that read codons beginning with adenine. Is involved in the transfer of the threonylcarbamoyl moiety of threonylcarbamoyl-AMP (TC-AMP) to the N6 group of A37, together with TsaE and TsaB. TsaD likely plays a direct catalytic role in this reaction. The sequence is that of tRNA N6-adenosine threonylcarbamoyltransferase from Bradyrhizobium diazoefficiens (strain JCM 10833 / BCRC 13528 / IAM 13628 / NBRC 14792 / USDA 110).